Here is an 890-residue protein sequence, read N- to C-terminus: Alanine--tRNA ligase (890 aa).

Positions 573, 577, 675, and 679 each coordinate Zn(2+).

The protein belongs to the class-II aminoacyl-tRNA synthetase family. Zn(2+) serves as cofactor.

Its subcellular location is the cytoplasm. It carries out the reaction tRNA(Ala) + L-alanine + ATP = L-alanyl-tRNA(Ala) + AMP + diphosphate. Its function is as follows. Catalyzes the attachment of alanine to tRNA(Ala) in a two-step reaction: alanine is first activated by ATP to form Ala-AMP and then transferred to the acceptor end of tRNA(Ala). Also edits incorrectly charged Ser-tRNA(Ala) and Gly-tRNA(Ala) via its editing domain. The protein is Alanine--tRNA ligase of Streptomyces avermitilis (strain ATCC 31267 / DSM 46492 / JCM 5070 / NBRC 14893 / NCIMB 12804 / NRRL 8165 / MA-4680).